The sequence spans 279 residues: Tryptophan 2,3-dioxygenase (279 aa).

Residues 48 to 52 (FIVIH), Tyr-110, and Arg-114 contribute to the substrate site. Residue His-237 participates in heme binding. Thr-251 contacts substrate.

This sequence belongs to the tryptophan 2,3-dioxygenase family. In terms of assembly, homotetramer. The cofactor is heme.

It carries out the reaction L-tryptophan + O2 = N-formyl-L-kynurenine. The protein operates within amino-acid degradation; L-tryptophan degradation via kynurenine pathway; L-kynurenine from L-tryptophan: step 1/2. Functionally, heme-dependent dioxygenase that catalyzes the oxidative cleavage of the L-tryptophan (L-Trp) pyrrole ring and converts L-tryptophan to N-formyl-L-kynurenine. Catalyzes the oxidative cleavage of the indole moiety. The polypeptide is Tryptophan 2,3-dioxygenase (Bacillus thuringiensis (strain Al Hakam)).